Reading from the N-terminus, the 336-residue chain is Vacuolar protein sorting-associated protein 26B (336 aa).

3 positions are modified to phosphoserine: Ser-302, Ser-304, and Ser-319.

It belongs to the VPS26 family. Component of the heterotrimeric retromer cargo-selective complex (CSC), also described as vacuolar protein sorting subcomplex (VPS), formed by VPS26 (VPS26A or VPS26B), VPS29 and VPS35. The CSC has a highly elongated structure with VPS26 and VPS29 binding independently at opposite distal ends of VPS35 as central platform. The CSC is believed to associate with variable sorting nexins to form functionally distinct retromer complex variants. The originally described SNX-BAR retromer is a pentamer containing the CSC and a heterodimeric membrane-deforming subcomplex formed between SNX1 or SNX2 and SNX5 or SNX6 (also called SNX-BAR subcomplex); the respective CSC and SNX-BAR subcomplexes associate with low affinity. The CSC associates with SNX3 to form a SNX3-retromer complex. The CSC associates with SNX27, the WASH complex and the SNX-BAR subcomplex to form the SNX27-retromer complex. Interacts with VPS29, VPS35, TBC1D5, GOLPH3, SNX27. In terms of tissue distribution, ubiquitously expressed in developing embryo and adult. Highly expressed in brain.

It is found in the cytoplasm. It localises to the membrane. The protein resides in the early endosome. The protein localises to the late endosome. Functionally, acts as a component of the retromer cargo-selective complex (CSC). The CSC is believed to be the core functional component of retromer or respective retromer complex variants acting to prevent missorting of selected transmembrane cargo proteins into the lysosomal degradation pathway. The recruitment of the CSC to the endosomal membrane involves RAB7A and SNX3. The SNX-BAR retromer mediates retrograde transport of cargo proteins from endosomes to the trans-Golgi network (TGN) and is involved in endosome-to-plasma membrane transport for cargo protein recycling. The SNX3-retromer mediates the retrograde transport of WLS distinct from the SNX-BAR retromer pathway. The SNX27-retromer is believed to be involved in endosome-to-plasma membrane trafficking and recycling of a broad spectrum of cargo proteins. The CSC seems to act as recruitment hub for other proteins, such as the WASH complex and TBC1D5. May be involved in retrograde transport of SORT1 but not of IGF2R. Acts redundantly with VSP26A in SNX-27 mediated endocytic recycling of SLC2A1/GLUT1. The chain is Vacuolar protein sorting-associated protein 26B (Vps26b) from Mus musculus (Mouse).